Consider the following 442-residue polypeptide: MMEESGIETTPPSTPPPSTIGTSVPAATTAISTPVPPIFSSPLAAPVFSPLPSFAQPIFSTPLPSSVPPLRTSVPLTYAPPLPVTGVHSPPAHTSVPAAFSSPLPAFSSPPSFPPPPLNTTPGPVLTAPPTGPPVGGFSMSSHYDITKGHAGRAPQTPLMPTYSAAPVTVLPNPVIQAPLAGSGSSITFPEEPEDSRVHTMHVDGSAGGIWGFFKGVAGNPMVKSVLDKTKHSMETVITTLDPGMASYIRTGGEMDIVVTSVKEVKVAAVREAFQEVFGMAVVTGEDGQSNIAPQPVGYAAGLKGAQERIDSLRRSGMIHEKQPAVSVENFIAELLPDKWFDIGCVIIDDPTHGIRLETFTQATPVPLEYVQQAQNLTPQDYNLRWSGLSVTVGEVLERSLAHVCRTDWHVAFTGMSRRQMIYSAAKALAGMYKQRLPPRIL.

The interval 1–27 is disordered; that stretch reads MMEESGIETTPPSTPPPSTIGTSVPAA.

It belongs to the PRRC1 family.

The protein localises to the golgi apparatus. In Xenopus laevis (African clawed frog), this protein is Protein PRRC1-A (prrc1-a).